A 204-amino-acid polypeptide reads, in one-letter code: Leucyl/phenylalanyl-tRNA--protein transferase (204 aa).

This sequence belongs to the L/F-transferase family.

The protein localises to the cytoplasm. It catalyses the reaction N-terminal L-lysyl-[protein] + L-leucyl-tRNA(Leu) = N-terminal L-leucyl-L-lysyl-[protein] + tRNA(Leu) + H(+). It carries out the reaction N-terminal L-arginyl-[protein] + L-leucyl-tRNA(Leu) = N-terminal L-leucyl-L-arginyl-[protein] + tRNA(Leu) + H(+). The enzyme catalyses L-phenylalanyl-tRNA(Phe) + an N-terminal L-alpha-aminoacyl-[protein] = an N-terminal L-phenylalanyl-L-alpha-aminoacyl-[protein] + tRNA(Phe). Functions in the N-end rule pathway of protein degradation where it conjugates Leu, Phe and, less efficiently, Met from aminoacyl-tRNAs to the N-termini of proteins containing an N-terminal arginine or lysine. This is Leucyl/phenylalanyl-tRNA--protein transferase from Rhizobium etli (strain CIAT 652).